The primary structure comprises 273 residues: Cytosolic sulfotransferase 4 (273 aa).

74–79 provides a ligand contact to 3'-phosphoadenylyl sulfate; sequence KCGTTW. H121 functions as the Proton acceptor in the catalytic mechanism. 3'-phosphoadenylyl sulfate-binding positions include R143 and 239-241; that span reads RKG.

This sequence belongs to the sulfotransferase 1 family.

The protein localises to the cytoplasm. Sulfotransferase that utilizes 3'-phospho-5'-adenylyl sulfate (PAPS) as sulfonate donor. The protein is Cytosolic sulfotransferase 4 (SOT4) of Arabidopsis thaliana (Mouse-ear cress).